A 453-amino-acid polypeptide reads, in one-letter code: Proton extrusion protein PxcA (453 aa).

The interval 147-189 (SQDKETQTLDNKSTNQTNSKLSNNNKISSGQNDSRLESASQKT) is disordered. A compositionally biased stretch (polar residues) spans 154–163 (TLDNKSTNQT). Low complexity predominate over residues 164-175 (NSKLSNNNKISS). Over residues 176-189 (GQNDSRLESASQKT) the composition is skewed to polar residues. 4 consecutive transmembrane segments (helical) span residues 235–255 (FILL…TFLL), 330–350 (SIGN…VIVS), 377–397 (LIIL…WEVI), and 413–433 (FNFL…KYWI).

The protein belongs to the CemA family.

Its subcellular location is the cell inner membrane. In terms of biological role, required for H(+) efflux immediately after light irradiation to form a rapid H(+) concentration gradient across the thylakoid membranes. Together with PxcL, contributes to transient H(+) uptake following dark to light transition. This Crocosphaera subtropica (strain ATCC 51142 / BH68) (Cyanothece sp. (strain ATCC 51142)) protein is Proton extrusion protein PxcA.